A 388-amino-acid polypeptide reads, in one-letter code: LIM/homeobox protein Lhx9 (388 aa).

LIM zinc-binding domains are found at residues 69–130 (ISDR…CHLG) and 131–193 (ISAS…LSYT). Disordered regions lie at residues 239–263 (ENEA…RMRT), 321–356 (ENGG…LTDL), and 369–388 (SNMD…TNLF). The homeobox DNA-binding region spans 267–326 (HHQLRTMKSYFAINHNPDAKDLKQLAQKTGLTKRVLQVWFQNARAKFRRNLLRQENGGVD). A compositionally biased stretch (low complexity) spans 344–356 (LTPPGTATTLTDL). The segment covering 376–388 (SGSPSQTTLTNLF) has biased composition (polar residues).

Interacts with LDB1 and LDB2.

The protein localises to the nucleus. Its function is as follows. Involved in gonadal development. In Rattus norvegicus (Rat), this protein is LIM/homeobox protein Lhx9 (Lhx9).